The following is a 309-amino-acid chain: Mas-related G-protein coupled receptor member E (309 aa).

Over 1-21 the chain is Extracellular; it reads MSLRVHTHSPSTQGDMAFNLT. N-linked (GlcNAc...) asparagine glycosylation occurs at N19. The chain crosses the membrane as a helical span at residues 22-42; sequence ILSLTELLSLGGLLGNGVALW. Topologically, residues 43-59 are cytoplasmic; sequence LLNQNVYRNPFSIYLLD. The chain crosses the membrane as a helical span at residues 60–80; the sequence is VACADLIFLCCHMVAIIPELL. The Extracellular segment spans residues 81 to 91; sequence QDQLNFPEFVH. A helical transmembrane segment spans residues 92–112; it reads ISLIMLRFFCYIVGLSLLVAI. Topologically, residues 113 to 132 are cytoplasmic; the sequence is STEQCLATLFPSGYLCRRPR. A helical membrane pass occupies residues 133-153; it reads YLTTCVCAFIWVLCLLLDLLL. Topologically, residues 154–168 are extracellular; the sequence is SGACTQFFGAPSYHL. A helical membrane pass occupies residues 169–189; sequence CGMLWLVVAVLLAALCCTMCV. Residues 190–212 are Cytoplasmic-facing; sequence TSLLLLLRVERGPERHQPRGFPT. The chain crosses the membrane as a helical span at residues 213–233; that stretch reads LVLLVILLFLFCGLPFGIFWL. Residues 234–247 are Extracellular-facing; it reads SKNLSWHTPLYFYH. N236 carries an N-linked (GlcNAc...) asparagine glycan. The chain crosses the membrane as a helical span at residues 248-268; it reads FSFFMASVHSAAKPAIYFFLG. The Cytoplasmic portion of the chain corresponds to 269–309; it reads STPGQRFQEPLRLVLQRALGDEAELGAVREASQGGLVDMTV.

Belongs to the G-protein coupled receptor 1 family. Mas subfamily.

The protein resides in the cell membrane. In terms of biological role, orphan receptor. May regulate nociceptor function and/or development, including the sensation or modulation of pain. The protein is Mas-related G-protein coupled receptor member E (Mrgpre) of Rattus norvegicus (Rat).